Reading from the N-terminus, the 270-residue chain is Diaminopimelate epimerase (270 aa).

Substrate is bound by residues Asn-15, Gln-49, and Asn-66. The active-site Proton donor is the Cys-75. Substrate contacts are provided by residues 76-77 (GN), Asn-155, Asn-187, and 204-205 (ER). Cys-213 functions as the Proton acceptor in the catalytic mechanism. 214–215 (GS) lines the substrate pocket.

Belongs to the diaminopimelate epimerase family. In terms of assembly, homodimer.

The protein localises to the cytoplasm. The enzyme catalyses (2S,6S)-2,6-diaminopimelate = meso-2,6-diaminopimelate. It functions in the pathway amino-acid biosynthesis; L-lysine biosynthesis via DAP pathway; DL-2,6-diaminopimelate from LL-2,6-diaminopimelate: step 1/1. In terms of biological role, catalyzes the stereoinversion of LL-2,6-diaminopimelate (L,L-DAP) to meso-diaminopimelate (meso-DAP), a precursor of L-lysine and an essential component of the bacterial peptidoglycan. The protein is Diaminopimelate epimerase of Rickettsia typhi (strain ATCC VR-144 / Wilmington).